A 276-amino-acid polypeptide reads, in one-letter code: C-type lectin domain family 12 member B (276 aa).

Residues 1-43 are Cytoplasmic-facing; sequence MSEEVTYATLTFQDSAGARNNRDGNNLRKRGHPAPSPIWRHAA. The ITIM motif motif lies at 5–10; it reads VTYATL. At Tyr7 the chain carries Phosphotyrosine. The helical; Signal-anchor for type II membrane protein transmembrane segment at 44-64 threads the bilayer; it reads LGLVTLCLMLLIGLVTLGMMF. The Extracellular portion of the chain corresponds to 65–276; it reads LQISNDINSD…AAPVKTEDLD (212 aa). N-linked (GlcNAc...) asparagine glycosylation is found at Asn91, Asn176, and Asn237. The C-type lectin domain occupies 150–264; it reads YQNSCYYFTT…CSAEIFWICE (115 aa). 2 cysteine pairs are disulfide-bonded: Cys172/Cys263 and Cys242/Cys255.

As to quaternary structure, homodimer. Interacts (via ITIM motif) with PTPN6. Interacts (via ITIM motif) with PTPN11; this interaction triggers dephosphorylation and activation of PTPN11. N-glycosylated. As to expression, detected in colon, heart, kidney, liver, lung, mammary gland, ovary, spleen and testis. Expressed in melanocytes (at protein level).

It is found in the cell membrane. In terms of biological role, inhibitory receptor postulated to negatively regulate immune and non-immune functions. Upon phosphorylation, recruits SH2 domain-containing PTPN6 and PTPN11 phosphatases to its ITIM motif and antagonizes activation signals. Although it inhibits KLRK1/NKG2D-mediated signaling, it does not bind known ligands of KLRK1/NKG2D and therefore is not its inhibitory counterpart. May limit activation of myeloid cell subsets in response to infection or tissue inflammation. May protect target cells against natural killer cell-mediated lysis. May negatively regulate cell cycle and differentiation of melanocytes via inactivation of STAT3. The chain is C-type lectin domain family 12 member B from Homo sapiens (Human).